Reading from the N-terminus, the 184-residue chain is dCTP deaminase (184 aa).

DCTP contacts are provided by residues 107–112 (KSTYAR), 131–133 (TLE), Gln-152, Tyr-166, and Gln-176. Glu-133 functions as the Proton donor/acceptor in the catalytic mechanism.

This sequence belongs to the dCTP deaminase family. As to quaternary structure, homotrimer.

The catalysed reaction is dCTP + H2O + H(+) = dUTP + NH4(+). It participates in pyrimidine metabolism; dUMP biosynthesis; dUMP from dCTP (dUTP route): step 1/2. Its function is as follows. Catalyzes the deamination of dCTP to dUTP. This is dCTP deaminase from Gemmatimonas aurantiaca (strain DSM 14586 / JCM 11422 / NBRC 100505 / T-27).